A 227-amino-acid chain; its full sequence is Ribonuclease 3 (227 aa).

The region spanning 6–128 is the RNase III domain; that stretch reads ASDYQQRIGY…VIAAIYLDAD (123 aa). Position 41 (Glu41) interacts with Mg(2+). Asp45 is an active-site residue. Positions 114 and 117 each coordinate Mg(2+). Glu117 is a catalytic residue. The DRBM domain occupies 155 to 225; sequence DPKTRLQEWL…ASHAINQLDS (71 aa). Basic and acidic residues predominate over residues 203 to 212; that stretch reads GEGSSRRLAE. The disordered stretch occupies residues 203–227; the sequence is GEGSSRRLAEQDAASHAINQLDSNK.

Belongs to the ribonuclease III family. In terms of assembly, homodimer. Requires Mg(2+) as cofactor.

Its subcellular location is the cytoplasm. The enzyme catalyses Endonucleolytic cleavage to 5'-phosphomonoester.. Functionally, digests double-stranded RNA. Involved in the processing of primary rRNA transcript to yield the immediate precursors to the large and small rRNAs (23S and 16S). Processes some mRNAs, and tRNAs when they are encoded in the rRNA operon. Processes pre-crRNA and tracrRNA of type II CRISPR loci if present in the organism. The protein is Ribonuclease 3 of Xylella fastidiosa (strain M12).